The following is a 224-amino-acid chain: Large ribosomal subunit protein uL1m (224 aa).

This sequence belongs to the universal ribosomal protein uL1 family.

The protein resides in the mitochondrion. The chain is Large ribosomal subunit protein uL1m (RPL1) from Reclinomonas americana.